A 34-amino-acid chain; its full sequence is Mytilin-A (34 aa).

Cystine bridges form between Cys-2-Cys-27, Cys-6-Cys-29, Cys-10-Cys-31, and Cys-15-Cys-34.

The protein resides in the secreted. In terms of biological role, has antibacterial activity against A.viridans, B.megaterium, M.luteus, E.faecalis, S.aureus and E.coli. It is active against the marine species A.carrageenovora, P.alginovora and C.drobachiensis. In Mytilus edulis (Blue mussel), this protein is Mytilin-A.